The chain runs to 393 residues: Seven-bladed beta-propeller protein Rv1057 (393 aa).

The disordered stretch occupies residues Asp-208 to Ala-230. A compositionally biased stretch (basic residues) spans Ser-214–Lys-224.

In terms of biological role, may play an important role in host-pathogen interactions and in ESAT-6 secretion. In Mycobacterium tuberculosis (strain ATCC 25618 / H37Rv), this protein is Seven-bladed beta-propeller protein Rv1057.